The following is a 256-amino-acid chain: Undecaprenyl-diphosphatase (256 aa).

The next 8 helical transmembrane spans lie at 5–25, 41–61, 74–94, 100–120, 135–155, 180–200, 208–228, and 234–254; these read IIEI…PISS, NSLM…VFYF, LLSL…VISS, LLEN…IILY, LNFK…IPGV, FLLA…NAIG, LVLI…KFFL, and FSLN…FIII.

This sequence belongs to the UppP family.

The protein localises to the cell inner membrane. It catalyses the reaction di-trans,octa-cis-undecaprenyl diphosphate + H2O = di-trans,octa-cis-undecaprenyl phosphate + phosphate + H(+). Catalyzes the dephosphorylation of undecaprenyl diphosphate (UPP). Confers resistance to bacitracin. This chain is Undecaprenyl-diphosphatase, found in Pelagibacter ubique (strain HTCC1062).